Consider the following 432-residue polypeptide: GRAM domain-containing protein 2B (432 aa).

Methionine 1 is modified (N-acetylmethionine). Disordered regions lie at residues 1 to 61 (MTEL…SPDQ) and 74 to 106 (DGAS…SSQY). Basic and acidic residues-rich tracts occupy residues 9-39 (EDTK…EEKK) and 81-99 (DKND…ERKK). Positions 110-177 (MHFHKLFLSV…FSVTLIKKTK (68 aa)) constitute a GRAM domain. Polar residues predominate over residues 220 to 233 (TSVGNSPNPSSAEN). The tract at residues 220-239 (TSVGNSPNPSSAENSFRADR) is disordered. Phosphoserine occurs at positions 225, 242, and 252. The tract at residues 262 to 285 (RQDMEGYSSSGSQTPESENSRDFH) is disordered. Over residues 268 to 278 (YSSSGSQTPES) the composition is skewed to polar residues.

In Homo sapiens (Human), this protein is GRAM domain-containing protein 2B (GRAMD2B).